We begin with the raw amino-acid sequence, 340 residues long: Ferredoxin--NADP reductase (340 aa).

FAD-binding residues include Asp-33, Gln-41, Tyr-46, Ala-86, Phe-120, Asp-286, and Thr-327.

This sequence belongs to the ferredoxin--NADP reductase type 2 family. As to quaternary structure, homodimer. The cofactor is FAD.

It catalyses the reaction 2 reduced [2Fe-2S]-[ferredoxin] + NADP(+) + H(+) = 2 oxidized [2Fe-2S]-[ferredoxin] + NADPH. The sequence is that of Ferredoxin--NADP reductase from Rickettsia conorii (strain ATCC VR-613 / Malish 7).